The following is a 342-amino-acid chain: Phosphate acyltransferase (342 aa).

It belongs to the PlsX family. In terms of assembly, homodimer. Probably interacts with PlsY.

It localises to the cytoplasm. It catalyses the reaction a fatty acyl-[ACP] + phosphate = an acyl phosphate + holo-[ACP]. The protein operates within lipid metabolism; phospholipid metabolism. Its function is as follows. Catalyzes the reversible formation of acyl-phosphate (acyl-PO(4)) from acyl-[acyl-carrier-protein] (acyl-ACP). This enzyme utilizes acyl-ACP as fatty acyl donor, but not acyl-CoA. The sequence is that of Phosphate acyltransferase from Shewanella pealeana (strain ATCC 700345 / ANG-SQ1).